A 117-amino-acid chain; its full sequence is Large ribosomal subunit protein bL20 (117 aa).

Belongs to the bacterial ribosomal protein bL20 family.

Functionally, binds directly to 23S ribosomal RNA and is necessary for the in vitro assembly process of the 50S ribosomal subunit. It is not involved in the protein synthesizing functions of that subunit. In Histophilus somni (strain 129Pt) (Haemophilus somnus), this protein is Large ribosomal subunit protein bL20.